Consider the following 460-residue polypeptide: Chromosomal replication initiator protein DnaA (460 aa).

The segment at 1–78 (MENFWQACSA…VPVEVQFVLD (78 aa)) is domain I, interacts with DnaA modulators. A domain II region spans residues 78–123 (DPRLVAARRPAAQASVVSDRADDVPSNVLEPIPSNATDHTPRRDQS). The interval 124 to 340 (RINTALTFDS…GALRKILAYS (217 aa)) is domain III, AAA+ region. The ATP site is built by glycine 168, glycine 170, lysine 171, and threonine 172. The segment at 341 to 460 (RFHGKDITIE…LHVLEQTLKG (120 aa)) is domain IV, binds dsDNA.

It belongs to the DnaA family. As to quaternary structure, oligomerizes as a right-handed, spiral filament on DNA at oriC.

Its subcellular location is the cytoplasm. In terms of biological role, plays an essential role in the initiation and regulation of chromosomal replication. ATP-DnaA binds to the origin of replication (oriC) to initiate formation of the DNA replication initiation complex once per cell cycle. Binds the DnaA box (a 9 base pair repeat at the origin) and separates the double-stranded (ds)DNA. Forms a right-handed helical filament on oriC DNA; dsDNA binds to the exterior of the filament while single-stranded (ss)DNA is stabiized in the filament's interior. The ATP-DnaA-oriC complex binds and stabilizes one strand of the AT-rich DNA unwinding element (DUE), permitting loading of DNA polymerase. After initiation quickly degrades to an ADP-DnaA complex that is not apt for DNA replication. Binds acidic phospholipids. The chain is Chromosomal replication initiator protein DnaA from Herminiimonas arsenicoxydans.